We begin with the raw amino-acid sequence, 628 residues long: Serine/threonine-protein kinase Nek11 (628 aa).

Positions 30–288 (YVLQQKLGSG…AADILKAPYM (259 aa)) constitute a Protein kinase domain. ATP-binding positions include 36-44 (LGSGSFGTV) and Lys-62. The Proton acceptor role is filled by Asp-159. A Phosphoserine; by CHEK1 modification is found at Ser-274. Residues 347–385 (WLRKLQAADERARRLKKIAEENYKENDKRMQALRSRNVG) adopt a coiled-coil conformation. Residues 452-463 (SEDSEEQEEEMI) show a composition bias toward acidic residues. The disordered stretch occupies residues 452–475 (SEDSEEQEEEMIFSEAGGDTKEEE).

It belongs to the protein kinase superfamily. NEK Ser/Thr protein kinase family. NIMA subfamily. In terms of assembly, interacts with NEK2. It depends on Mn(2+) as a cofactor. Mg(2+) serves as cofactor. Post-translationally, phosphorylated by NEK2. Phosphorylation at Ser-274 is important for its activation.

The protein localises to the nucleus. It localises to the nucleolus. It carries out the reaction L-seryl-[protein] + ATP = O-phospho-L-seryl-[protein] + ADP + H(+). The catalysed reaction is L-threonyl-[protein] + ATP = O-phospho-L-threonyl-[protein] + ADP + H(+). Its activity is regulated as follows. Autorepressed by intramolecular binding of the C-terminus which dissociates following phosphorylation by NEK2. Activated in response to DNA damage. Inhibited by zinc. Functionally, protein kinase which plays an important role in the G2/M checkpoint response to DNA damage. Controls degradation of CDC25A by directly phosphorylating it on residues whose phosphorylation is required for BTRC-mediated polyubiquitination and degradation. This Mus musculus (Mouse) protein is Serine/threonine-protein kinase Nek11.